The primary structure comprises 325 residues: Beta-ketoacyl-[acyl-carrier-protein] synthase III 2 (325 aa).

Catalysis depends on residues Cys113 and His250. The segment at 251 to 255 (SANLR) is ACP-binding. The active site involves Asn280.

This sequence belongs to the thiolase-like superfamily. FabH family. As to quaternary structure, homodimer.

The protein localises to the cytoplasm. The enzyme catalyses 3-methylbutanoyl-CoA + malonyl-[ACP] + H(+) = 5-methyl-3-oxohexanoyl-[ACP] + CO2 + CoA. The catalysed reaction is 2-methylpropanoyl-CoA + malonyl-[ACP] + H(+) = 4-methyl-3-oxopentanoyl-[ACP] + CO2 + CoA. It carries out the reaction (2S)-2-methylbutanoyl-CoA + malonyl-[ACP] + H(+) = (4S)-4-methyl-3-oxohexanoyl-[ACP] + CO2 + CoA. It catalyses the reaction malonyl-[ACP] + acetyl-CoA + H(+) = 3-oxobutanoyl-[ACP] + CO2 + CoA. The enzyme catalyses malonyl-[ACP] + propanoyl-CoA + H(+) = 3-oxopentanoyl-[ACP] + CO2 + CoA. The catalysed reaction is butanoyl-CoA + malonyl-[ACP] + H(+) = 3-oxohexanoyl-[ACP] + CO2 + CoA. It carries out the reaction pentanoyl-CoA + malonyl-[ACP] + H(+) = 3-oxoheptanoyl-[ACP] + CO2 + CoA. It catalyses the reaction hexanoyl-CoA + malonyl-[ACP] + H(+) = 3-oxooctanoyl-[ACP] + CO2 + CoA. The enzyme catalyses heptanoyl-CoA + malonyl-[ACP] + H(+) = 3-oxononanoyl-[ACP] + CO2 + CoA. It participates in lipid metabolism; fatty acid biosynthesis. Its function is as follows. Catalyzes the condensation reaction of fatty acid synthesis by the addition to an acyl acceptor of two carbons from malonyl-ACP. Catalyzes the first condensation reaction which initiates fatty acid synthesis and may therefore play a role in governing the total rate of fatty acid production. Possesses both acetoacetyl-ACP synthase and acetyl transacylase activities. Has some substrate specificity for branched chain acyl-CoA, determining the biosynthesis of branched-chain of fatty acids instead of straight-chain. The chain is Beta-ketoacyl-[acyl-carrier-protein] synthase III 2 from Bacillus subtilis (strain 168).